Reading from the N-terminus, the 372-residue chain is Saccharopine dehydrogenase [NAD(+), L-lysine-forming] (372 aa).

Arg17 and Lys76 together coordinate L-saccharopine. Lys76 functions as the Proton acceptor in the catalytic mechanism. Catalysis depends on His95, which acts as the Proton donor. Gln100 contributes to the L-saccharopine binding site. NAD(+) is bound at residue Arg129. L-saccharopine contacts are provided by Arg130 and Phe134. Residues 202 to 203, Asp226, Thr230, Tyr250, and Val277 each bind NAD(+); that span reads GR. Residues Cys204 and Cys248 are joined by a disulfide bond. 278–280 lines the L-saccharopine pocket; sequence SAD. 317 to 320 provides a ligand contact to NAD(+); it reads IDHL. The Microbody targeting signal signature appears at 370 to 372; it reads SKL.

This sequence belongs to the AlaDH/PNT family. In terms of assembly, monomer.

It localises to the peroxisome. The enzyme catalyses L-saccharopine + NAD(+) + H2O = L-lysine + 2-oxoglutarate + NADH + H(+). It functions in the pathway amino-acid biosynthesis; L-lysine biosynthesis via AAA pathway; L-lysine from L-alpha-aminoadipate (fungal route): step 3/3. Catalyzes the NAD(+)-dependent cleavage of saccharopine to L-lysine and 2-oxoglutarate, the final step in the alpha-aminoadipate (AAA) pathway for lysin biosynthesis. This chain is Saccharopine dehydrogenase [NAD(+), L-lysine-forming] (LYS1), found in Candida glabrata (strain ATCC 2001 / BCRC 20586 / JCM 3761 / NBRC 0622 / NRRL Y-65 / CBS 138) (Yeast).